Here is a 513-residue protein sequence, read N- to C-terminus: UDP-N-acetylmuramyl-tripeptide synthetase (513 aa).

Ser38 contacts UDP-N-acetyl-alpha-D-muramoyl-L-alanyl-D-glutamate. Gly115 to Thr121 lines the ATP pocket. UDP-N-acetyl-alpha-D-muramoyl-L-alanyl-D-glutamate is bound by residues Thr161–Thr162, Ser188, and Arg196. Residue Lys230 is modified to N6-carboxylysine.

This sequence belongs to the MurCDEF family. MurE subfamily. Carboxylation is probably crucial for Mg(2+) binding and, consequently, for the gamma-phosphate positioning of ATP.

Its subcellular location is the cytoplasm. It functions in the pathway cell wall biogenesis; peptidoglycan biosynthesis. In terms of biological role, catalyzes the addition of an amino acid to the nucleotide precursor UDP-N-acetylmuramoyl-L-alanyl-D-glutamate (UMAG) in the biosynthesis of bacterial cell-wall peptidoglycan. This chain is UDP-N-acetylmuramyl-tripeptide synthetase, found in Latilactobacillus sakei subsp. sakei (strain 23K) (Lactobacillus sakei subsp. sakei).